The chain runs to 759 residues: MRGLLRASSLLLCGVILIQLLAAQIHAQSKKPKSPWPTLTGDPPLVIARGGFSGLFPDSSYDAYNFAILTSVPDAVLWCDVQLTKDALGICFPDLTMRNSSSIEAVYPTRQKSYPVNGVPTSGWFTIDFSLKDLKDVNLIRGILSRSEKFDGNSNPIMTVQSVSTQMKPSFFWLNVQHDAFYAQHNLSMSSFLVAASKTVLIDFISSPEVNFFKKIAGRFGRNGPSLVFRFLGQDEFEPTTNRTYGSILSNLTFVKTFASGILVPKSYILPLDDQQYLLPHTSLVQDAHKAGLEVFVSGFANDIDIAHDYSFDPVSEYLSFVDNGNFSVDGVLSDFPITASASLDCFSHVGRNATKQVDFLVITKDGASGDYPGCTDLAYKKAIKDGADVIDCSVQLSSDGTPFCLSSIDLGNSTTVSLTAFRNRSTTVPELGSLGAIYTFSLTWAEIQTLTPAISNPYRVTSLFRNPKQKNAGKLFSLSDFLSLAKNSTSLSGVLISVENAAYLREEQGLDVVKAVLDTLTQTGYSNSTATKVMIQSTNSSVLVDFKKQSQYETVYKVEENIRDILDSAIEDIKKFADAVVIQKLSVFPVAQSFITTQTNVVEKLQKSQLPVYVELFQNEFLSQPYDFFADATVEINSYITGAGINGTITEFPFTAARYKRNLCLGRKETIPYMAPAQPGALLTLVSPTAFPPAEAPNPVFTDADVTEPPLPPVTAKAPTSSPGTPSTNAQAPSGQTRITLSLLLSVFAMVLASLLLL.

The first 27 residues, 1 to 27 (MRGLLRASSLLLCGVILIQLLAAQIHA), serve as a signal peptide directing secretion. At 28-738 (QSKKPKSPWP…TNAQAPSGQT (711 aa)) the chain is on the extracellular side. The GP-PDE 1 domain occupies 44–344 (PLVIARGGFS…DFPITASASL (301 aa)). Asparagine 99, asparagine 186, asparagine 242, asparagine 251, asparagine 326, asparagine 353, asparagine 413, asparagine 424, asparagine 488, asparagine 528, asparagine 540, and asparagine 647 each carry an N-linked (GlcNAc...) asparagine glycan. Residues 360–661 (FLVITKDGAS…EFPFTAARYK (302 aa)) enclose the GP-PDE 2 domain. A disordered region spans residues 702–734 (FTDADVTEPPLPPVTAKAPTSSPGTPSTNAQAP). The span at 719–734 (APTSSPGTPSTNAQAP) shows a compositional bias: polar residues. Residues 739–759 (RITLSLLLSVFAMVLASLLLL) form a helical membrane-spanning segment.

Belongs to the glycerophosphoryl diester phosphodiesterase family. Expressed in roots, shoots, rosette and cauline leaves, stems, flowers and siliques.

It is found in the cell membrane. It catalyses the reaction a sn-glycero-3-phosphodiester + H2O = an alcohol + sn-glycerol 3-phosphate + H(+). Involved in primary cell wall organization. Required for the accumulation of crystalline cellulose. The sequence is that of Glycerophosphodiester phosphodiesterase GDPDL3 from Arabidopsis thaliana (Mouse-ear cress).